The chain runs to 1066 residues: TBC1 domain family member 31 (1066 aa).

7 WD repeats span residues 33–74, 75–116, 117–157, 158–200, 201–248, 249–296, and 297–334; these read HNTS…LHGN, RFNL…TVTK, ELVS…LDTF, QRKR…CDTL, FCKY…ARQL, FRII…MQTC, and KLLFEIGSLDEGISSSAISPHGRYIASIMENGSLNIYS. Residues 424 to 599 form the Rab-GAP TBC domain; it reads EYPTKYRMFI…KLFDNIFSNH (176 aa). Coiled-coil stretches lie at residues 728–861 and 914–948; these read QKQE…DLEE and NKCYQEVAKLLRENRRKEIEIINAMVEEEAKKWKE. Residues 989-998 are compositionally biased toward basic and acidic residues; sequence CHKEEPRFQN. Positions 989 to 1020 are disordered; that stretch reads CHKEEPRFQNEQDSSCLPRTSQLNDSSEMDPS. The segment covering 999 to 1020 has biased composition (polar residues); that stretch reads EQDSSCLPRTSQLNDSSEMDPS. A mediates direct interaction with PJA2 region spans residues 1053–1056; that stretch reads RARH.

In terms of assembly, interacts with PJA2; the interaction is direct and recruits PJA2 to centrosomes. Interacts with OFD1; regulates its activity in cilium assembly. Interacts with PRKACA.

The protein localises to the cytoplasm. The protein resides in the cytoskeleton. It is found in the microtubule organizing center. It localises to the centrosome. Its subcellular location is the centriolar satellite. The protein localises to the cilium basal body. In terms of biological role, molecular adapter which is involved in cilium biogenesis. Part of a functional complex including OFD1 a centriolar protein involved in cilium assembly. Could regulate the cAMP-dependent phosphorylation of OFD1, and its subsequent ubiquitination by PJA2 which ultimately leads to its proteasomal degradation. The sequence is that of TBC1 domain family member 31 from Homo sapiens (Human).